Consider the following 271-residue polypeptide: Undecaprenyl-diphosphatase (271 aa).

8 consecutive transmembrane segments (helical) span residues 2 to 22 (LLIL…FVPV), 42 to 62 (ANLF…VVYW), 80 to 100 (LRFW…GFSL), 108 to 128 (LFNP…MIIV), 149 to 168 (SIFV…SRSA), 175 to 195 (WIAG…AIPV), 214 to 234 (IEFI…LVVI), and 248 to 268 (IFAI…IFKI).

The protein belongs to the UppP family.

It localises to the cell membrane. The enzyme catalyses di-trans,octa-cis-undecaprenyl diphosphate + H2O = di-trans,octa-cis-undecaprenyl phosphate + phosphate + H(+). Its function is as follows. Catalyzes the dephosphorylation of undecaprenyl diphosphate (UPP). Confers resistance to bacitracin. This is Undecaprenyl-diphosphatase from Clostridium tetani (strain Massachusetts / E88).